We begin with the raw amino-acid sequence, 961 residues long: Roundabout homolog 4 (961 aa).

The first 37 residues, 1 to 37, serve as a signal peptide directing secretion; the sequence is MGQGEELRAAVDSGGMGLLGTKCPLPLLLLFIMGGKA. Ig-like C2-type domains are found at residues 42–142 and 148–235; these read PQIL…ARLS and EDFR…ARVS. 2 disulfides stabilise this stretch: C63-C125 and C169-C218. Residues N211 and N257 are each glycosylated (N-linked (GlcNAc...) asparagine). 2 Fibronectin type-III domains span residues 259–356 and 358–453; these read TLLN…LPEQ and PSAP…LEQA. N-linked (GlcNAc...) asparagine glycosylation is found at N371, N400, and N407. Over residues 544 to 559 the composition is skewed to low complexity; it reads SGSRDLSSSSSLSSRL. 2 disordered regions span residues 544–563 and 600–634; these read SGSRDLSSSSSLSSRLGVDP and QTSSPPVRPSPQTPAARRLPPKLTGTSSPWASSDS. The span at 623 to 634 shows a compositional bias: polar residues; it reads TGTSSPWASSDS. 2 N-linked (GlcNAc...) asparagine glycosylation sites follow: N691 and N723. A disordered region spans residues 726–810; the sequence is ELAARPLPPT…SLEEEDQDSV (85 aa). Over residues 755 to 769 the composition is skewed to low complexity; it reads LQAPSSDPLPAAPLS. Residues 770–783 are compositionally biased toward polar residues; sequence VLNSSRPSSPQASF. N-linked (GlcNAc...) asparagine glycans are attached at residues N772 and N793. Residues 784–801 show a composition bias toward low complexity; that stretch reads LSVPSPGSSNLSSSSLSS. A Phosphoserine modification is found at S823.

This sequence belongs to the immunoglobulin superfamily. ROBO family. In terms of assembly, interacts with SLIT2 and ENAH.

Receptor for Slit proteins, at least for SLIT2, and seems to be involved in angiogenesis and vascular patterning. May mediate the inhibition of primary endothelial cell migration by Slit proteins. Involved in the maintenance of endothelial barrier organization and function. This Rattus norvegicus (Rat) protein is Roundabout homolog 4 (Robo4).